The primary structure comprises 269 residues: Imidazole glycerol phosphate synthase subunit HisF (269 aa).

Residues Asp23 and Asp142 contribute to the active site.

This sequence belongs to the HisA/HisF family. In terms of assembly, heterodimer of HisH and HisF.

Its subcellular location is the cytoplasm. The catalysed reaction is 5-[(5-phospho-1-deoxy-D-ribulos-1-ylimino)methylamino]-1-(5-phospho-beta-D-ribosyl)imidazole-4-carboxamide + L-glutamine = D-erythro-1-(imidazol-4-yl)glycerol 3-phosphate + 5-amino-1-(5-phospho-beta-D-ribosyl)imidazole-4-carboxamide + L-glutamate + H(+). Its pathway is amino-acid biosynthesis; L-histidine biosynthesis; L-histidine from 5-phospho-alpha-D-ribose 1-diphosphate: step 5/9. Functionally, IGPS catalyzes the conversion of PRFAR and glutamine to IGP, AICAR and glutamate. The HisF subunit catalyzes the cyclization activity that produces IGP and AICAR from PRFAR using the ammonia provided by the HisH subunit. In Bordetella parapertussis (strain 12822 / ATCC BAA-587 / NCTC 13253), this protein is Imidazole glycerol phosphate synthase subunit HisF.